Here is a 176-residue protein sequence, read N- to C-terminus: Major non-capsid protein (176 aa).

Belongs to the tenuiviruses NCP family.

It is found in the host cytoplasm. Induces the formation of large intracellular inclusion body, organized in amorphous and crystalline arrays. Presumably the main cause of the stripe disease observed in host. The sequence is that of Major non-capsid protein from Rottboellia (Sorghum).